A 313-amino-acid chain; its full sequence is Intracellular endo-alpha-(1-&gt;5)-L-arabinanase (313 aa).

Asp-27 acts as the Proton acceptor in catalysis. Substrate contacts are provided by residues Asp-27, Gly-105, 144–147, and 164–166; these read NAID and SFW. The Proton donor role is filled by Glu-201. Ca(2+) is bound at residue His-271.

It belongs to the glycosyl hydrolase 43 family. In terms of assembly, monomer. Ca(2+) serves as cofactor.

The protein resides in the cytoplasm. The enzyme catalyses Endohydrolysis of (1-&gt;5)-alpha-arabinofuranosidic linkages in (1-&gt;5)-arabinans.. It functions in the pathway glycan metabolism; L-arabinan degradation. Functionally, involved in the degradation of arabinan and is a key enzyme in the complete degradation of the plant cell wall. Catalyzes the cleavage of endo alpha-(1-&gt;5)-L-arabinofuranosyl residues in debranched arabinan. In Geobacillus thermodenitrificans, this protein is Intracellular endo-alpha-(1-&gt;5)-L-arabinanase (abn-ts).